The following is a 290-amino-acid chain: MGLVHALLPFAAAAALLLLAAPPPATADDPGLAVYWGRHKEEGSLREACDTGRYTTVIITFYNAFGHGRYSLDISGHPLAAVGADIKHCQSRGITVLLSIGGQGGAYSLPTNASAADVADNLWNAYLGGHRAGVARPFGDDAAVDGIDFFIDQGGADHYDDLARRLDGYNKYYRGRVGVLLTATTRCSYPDHRLEKALATGVFARIHVRMFGDEQCTMSPRYSWEKWAAAFPGSKVYIGLVASPEQDSAWMFQKDLYYEMLQFVRSLPNYGGLAIYDRYFDKKANYTGEG.

A signal peptide spans 1 to 27 (MGLVHALLPFAAAAALLLLAAPPPATA). One can recognise a GH18 domain in the interval 30 to 290 (PGLAVYWGRH…DKKANYTGEG (261 aa)). Cys-49 and Cys-89 are joined by a disulfide. Asn-112 carries an N-linked (GlcNAc...) asparagine glycan. Cys-187 and Cys-216 form a disulfide bridge. An N-linked (GlcNAc...) asparagine glycan is attached at Asn-285.

The protein belongs to the glycosyl hydrolase 18 family. Xylanase inhibitor subfamily. In terms of assembly, binds to fungal GH10 xylanases.

It is found in the secreted. Fungal xylanase inhibitor. Possesses competitive inhibiting activity against several fungal endo-1,4-beta-D-xylanases belonging to glycoside hydrolase family 10 (GH10) and family 11 (GH11). May function in plant defense against secreted fungal pathogen xylanases. Is similar to class III chitinases, but does not exhibit chitinase activity. The sequence is that of Xylanase inhibitor protein 2 from Oryza sativa subsp. japonica (Rice).